The following is a 382-amino-acid chain: Lipid-A-disaccharide synthase (382 aa).

The protein belongs to the LpxB family.

It catalyses the reaction 2-N,3-O-bis[(3R)-3-hydroxytetradecanoyl]-alpha-D-glucosaminyl 1-phosphate + UDP-2-N,3-O-bis[(3R)-3-hydroxytetradecanoyl]-alpha-D-glucosamine = lipid A disaccharide (E. coli) + UDP + H(+). The catalysed reaction is a lipid X + a UDP-2-N,3-O-bis[(3R)-3-hydroxyacyl]-alpha-D-glucosamine = a lipid A disaccharide + UDP + H(+). Its pathway is glycolipid biosynthesis; lipid IV(A) biosynthesis; lipid IV(A) from (3R)-3-hydroxytetradecanoyl-[acyl-carrier-protein] and UDP-N-acetyl-alpha-D-glucosamine: step 5/6. Functionally, condensation of UDP-2,3-diacylglucosamine and 2,3-diacylglucosamine-1-phosphate to form lipid A disaccharide, a precursor of lipid A, a phosphorylated glycolipid that anchors the lipopolysaccharide to the outer membrane of the cell. The polypeptide is Lipid-A-disaccharide synthase (Salmonella arizonae (strain ATCC BAA-731 / CDC346-86 / RSK2980)).